A 594-amino-acid chain; its full sequence is Alpha-1,4-glucan:maltose-1-phosphate maltosyltransferase (594 aa).

Residues 244–270 (NRKGRNNSLTPGPDDPGSPYAIGSEEG) are disordered. Alpha-maltose 1-phosphate contacts are provided by lysine 246, glutamine 306, and aspartate 341. The active-site Nucleophile is the aspartate 377. Position 378 (asparagine 378) interacts with alpha-maltose 1-phosphate. The active-site Proton donor is the glutamate 406. Position 517-518 (517-518 (KY)) interacts with alpha-maltose 1-phosphate.

It belongs to the glycosyl hydrolase 13 family. GlgE subfamily. In terms of assembly, homodimer.

It carries out the reaction alpha-maltose 1-phosphate + [(1-&gt;4)-alpha-D-glucosyl](n) = [(1-&gt;4)-alpha-D-glucosyl](n+2) + phosphate. In terms of biological role, maltosyltransferase that uses maltose 1-phosphate (M1P) as the sugar donor to elongate linear or branched alpha-(1-&gt;4)-glucans. Is involved in a branched alpha-glucan biosynthetic pathway from trehalose, together with TreS, Mak and GlgB. This is Alpha-1,4-glucan:maltose-1-phosphate maltosyltransferase from Cereibacter sphaeroides (Rhodobacter sphaeroides).